The sequence spans 266 residues: Glucosamine-6-phosphate deaminase (266 aa).

Aspartate 72 serves as the catalytic Proton acceptor; for enolization step. The active-site For ring-opening step is aspartate 141. The active-site Proton acceptor; for ring-opening step is histidine 143. The For ring-opening step role is filled by glutamate 148.

Belongs to the glucosamine/galactosamine-6-phosphate isomerase family. NagB subfamily. In terms of assembly, homohexamer.

It carries out the reaction alpha-D-glucosamine 6-phosphate + H2O = beta-D-fructose 6-phosphate + NH4(+). Its pathway is amino-sugar metabolism; N-acetylneuraminate degradation; D-fructose 6-phosphate from N-acetylneuraminate: step 5/5. With respect to regulation, allosterically activated by N-acetylglucosamine 6-phosphate (GlcNAc6P). Functionally, catalyzes the reversible isomerization-deamination of glucosamine 6-phosphate (GlcN6P) to form fructose 6-phosphate (Fru6P) and ammonium ion. The protein is Glucosamine-6-phosphate deaminase of Yersinia pseudotuberculosis serotype O:1b (strain IP 31758).